The following is a 191-amino-acid chain: Signal peptidase complex catalytic subunit sec11 (191 aa).

Topologically, residues 1–18 are cytoplasmic; it reads MLSALGGNLSNARQSIAQ. Residues 19 to 39 form a helical; Signal-anchor for type II membrane protein membrane-spanning segment; that stretch reads VLNFALVLSTAFMLWKGVSIA. Residues 40–191 are Lumenal-facing; that stretch reads SNSSSPIVVV…MGLMVILQRE (152 aa). An N-linked (GlcNAc...) asparagine glycan is attached at Asn41. Catalysis depends on charge relay system residues Ser53, His92, and Asp133. Residues 177 to 188 form a C-terminal short (CTS) helix region; sequence VLLGVMGLMVIL.

The protein belongs to the peptidase S26B family. Component of the signal peptidase complex (SPC) composed of a catalytic subunit SEC11 and three accessory subunits SPC1, SPC2 and SPC3. The complex induces a local thinning of the ER membrane which is used to measure the length of the signal peptide (SP) h-region of protein substrates. This ensures the selectivity of the complex towards h-regions shorter than 18-20 amino acids. SPC associates with the translocon complex.

Its subcellular location is the endoplasmic reticulum membrane. It catalyses the reaction Cleavage of hydrophobic, N-terminal signal or leader sequences from secreted and periplasmic proteins.. Functionally, catalytic component of the signal peptidase complex (SPC) which catalyzes the cleavage of N-terminal signal sequences from nascent proteins as they are translocated into the lumen of the endoplasmic reticulum. Specifically cleaves N-terminal signal peptides that contain a hydrophobic alpha-helix (h-region) shorter than 18-20 amino acids. This chain is Signal peptidase complex catalytic subunit sec11 (sec11), found in Talaromyces marneffei (strain ATCC 18224 / CBS 334.59 / QM 7333) (Penicillium marneffei).